A 266-amino-acid chain; its full sequence is Adaptin ear-binding coat-associated protein 2 (266 aa).

2 disordered regions span residues 165–198 (MRKKEGAAGTPRARPTSAGGLSLLPPPPGGKSST) and 245–266 (DFTKSTGSPSSQSQPGTGWVQF). Phosphoserine is present on S181. Short sequence motifs (WXXF motif) lie at residues 243 to 246 (WGDF) and 263 to 266 (WVQF). The segment covering 249 to 266 (STGSPSSQSQPGTGWVQF) has biased composition (low complexity).

It belongs to the NECAP family. Interacts with AP1G1 and AP2A1 components of the adapter protein complexes AP-1 and AP-2. Interacts with the GAE domain proteins GGA1, GGA2 and GGA3. In terms of tissue distribution, expressed in brain, heart, kidney, liver, lung, skeletal muscles and testis (at protein level).

Its subcellular location is the cytoplasmic vesicle. The protein resides in the clathrin-coated vesicle membrane. The protein localises to the cell membrane. Involved in endocytosis. The protein is Adaptin ear-binding coat-associated protein 2 (Necap2) of Mus musculus (Mouse).